A 356-amino-acid polypeptide reads, in one-letter code: tRNA N6-adenosine threonylcarbamoyltransferase (356 aa).

2 residues coordinate Fe cation: H115 and H119. Substrate is bound by residues 139–143 (LVSGG), D173, G186, D190, and N291. Residue D319 participates in Fe cation binding.

The protein belongs to the KAE1 / TsaD family. Fe(2+) serves as cofactor.

The protein localises to the cytoplasm. It catalyses the reaction L-threonylcarbamoyladenylate + adenosine(37) in tRNA = N(6)-L-threonylcarbamoyladenosine(37) in tRNA + AMP + H(+). Its function is as follows. Required for the formation of a threonylcarbamoyl group on adenosine at position 37 (t(6)A37) in tRNAs that read codons beginning with adenine. Is involved in the transfer of the threonylcarbamoyl moiety of threonylcarbamoyl-AMP (TC-AMP) to the N6 group of A37, together with TsaE and TsaB. TsaD likely plays a direct catalytic role in this reaction. In Arthrobacter sp. (strain FB24), this protein is tRNA N6-adenosine threonylcarbamoyltransferase.